The sequence spans 314 residues: Ribosomal protein uL3 glutamine methyltransferase (314 aa).

It belongs to the protein N5-glutamine methyltransferase family. PrmB subfamily.

It carries out the reaction L-glutaminyl-[ribosomal protein uL3] + S-adenosyl-L-methionine = N(5)-methyl-L-glutaminyl-[ribosomal protein uL3] + S-adenosyl-L-homocysteine + H(+). Functionally, methylates large ribosomal subunit protein uL3 on a specific glutamine residue. The protein is Ribosomal protein uL3 glutamine methyltransferase of Francisella tularensis subsp. tularensis (strain SCHU S4 / Schu 4).